The sequence spans 440 residues: uncharacterized protein (440 aa).

The next 10 membrane-spanning stretches (helical) occupy residues 1 to 21 (MLLV…QLYR), 29 to 49 (TVFI…SAFE), 70 to 90 (LLQM…IARI), 101 to 121 (VGVL…GIAM), 179 to 199 (TSII…LSLG), 226 to 246 (FVIR…AATS), 258 to 278 (IVAS…LLFF), 343 to 363 (IYPA…PFSF), 366 to 386 (ILTL…VGGG), and 389 to 409 (FAAI…GLLI).

The protein belongs to the dicarboxylate/amino acid:cation symporter (DAACS) (TC 2.A.23) family.

It localises to the cell membrane. This is an uncharacterized protein from Haemophilus influenzae (strain ATCC 51907 / DSM 11121 / KW20 / Rd).